We begin with the raw amino-acid sequence, 90 residues long: Conotoxin Ca8.2 (90 aa).

The signal sequence occupies residues 1-21 (MMLKMGAMFVLLLLFILPSSQ). Positions 22-46 (QEGDVQARKTHLKRGFYGTLAMSTR) are excised as a propeptide. Position 89 is a glutamine amide (glutamine 89).

This sequence belongs to the conotoxin S superfamily. Post-translationally, contains 5 disulfide bonds. Expressed by the venom duct.

Its subcellular location is the secreted. In Conus caracteristicus (Characteristic cone), this protein is Conotoxin Ca8.2.